Consider the following 188-residue polypeptide: Elongation factor P (188 aa).

The protein belongs to the elongation factor P family.

The protein localises to the cytoplasm. It functions in the pathway protein biosynthesis; polypeptide chain elongation. In terms of biological role, involved in peptide bond synthesis. Stimulates efficient translation and peptide-bond synthesis on native or reconstituted 70S ribosomes in vitro. Probably functions indirectly by altering the affinity of the ribosome for aminoacyl-tRNA, thus increasing their reactivity as acceptors for peptidyl transferase. The polypeptide is Elongation factor P (Anaplasma marginale (strain Florida)).